The chain runs to 357 residues: UPF0283 membrane protein BOV_0999 (357 aa).

A disordered region spans residues 1-36; that stretch reads MSDKTPRKPTAFRLEQPARVSAASEQEEPRRPRAVK. Residues 27–36 show a composition bias toward basic and acidic residues; the sequence is EEPRRPRAVK. The next 2 helical transmembrane spans lie at 78-98 and 109-129; these read ILFGALGILVSFAIGIWTEDL and LGWTALGVAMVALAAFAAIIL.

This sequence belongs to the UPF0283 family.

It is found in the cell inner membrane. The chain is UPF0283 membrane protein BOV_0999 from Brucella ovis (strain ATCC 25840 / 63/290 / NCTC 10512).